We begin with the raw amino-acid sequence, 514 residues long: 2-isopropylmalate synthase (514 aa).

The Pyruvate carboxyltransferase domain occupies 5–267 (LVIFDTTLRD…DTRIHTPEIL (263 aa)). 4 residues coordinate Mn(2+): Asp14, His202, His204, and Asn238. The regulatory domain stretch occupies residues 394-514 (RLVALKVGTQ…GSKEHPQAHV (121 aa)).

The protein belongs to the alpha-IPM synthase/homocitrate synthase family. LeuA type 1 subfamily. As to quaternary structure, homodimer. Requires Mn(2+) as cofactor.

It localises to the cytoplasm. The catalysed reaction is 3-methyl-2-oxobutanoate + acetyl-CoA + H2O = (2S)-2-isopropylmalate + CoA + H(+). Its pathway is amino-acid biosynthesis; L-leucine biosynthesis; L-leucine from 3-methyl-2-oxobutanoate: step 1/4. Its function is as follows. Catalyzes the condensation of the acetyl group of acetyl-CoA with 3-methyl-2-oxobutanoate (2-ketoisovalerate) to form 3-carboxy-3-hydroxy-4-methylpentanoate (2-isopropylmalate). The chain is 2-isopropylmalate synthase from Hydrogenovibrio crunogenus (strain DSM 25203 / XCL-2) (Thiomicrospira crunogena).